The chain runs to 383 residues: Micronemal protein 3 (383 aa).

The N-terminal stretch at methionine 1 to alanine 26 is a signal peptide. The propeptide at leucine 27–glutamine 66 is required for proper sorting to micronemes. The tract at residues serine 67–cysteine 145 is lectin-like; required for the binding of host cells. Required for proper sorting to micronemes stretches follow at residues serine 146 to proline 189, cysteine 190 to glycine 236, and cysteine 237 to lysine 290. An EGF-like domain is found at serine 186–glutamate 227. 2 disulfide bridges follow: cysteine 190–cysteine 204 and cysteine 198–cysteine 214. N-linked (GlcNAc...) asparagine glycosylation occurs at asparagine 201. Residues glutamate 294–histidine 359 are involved in dimerization.

In terms of assembly, homodimer; dimerization is likely required for host cell binding but not for trafficking to micronemes. Post-translationally, removal of the propeptide occurs in a post-medial-Golgi compartment. Removal of the propeptide is required for the host cell binding. The presence of propeptide does not affect dimerization. The presence of propeptide does not affect sorting to micronemes.

It is found in the cytoplasmic vesicle. The protein localises to the secretory vesicle. The protein resides in the microneme. Its subcellular location is the secreted. It localises to the golgi apparatus. It is found in the endoplasmic reticulum. In terms of biological role, adhesin; can bind both the host cells and the parasites. May be involved in parasite invasion by acting as a bridge between the parasite and the host cell. Triggers innate immune responses in mouse macrophages via the TLR11/MyD88/NF-kappa-B pathway. Induces TNF/TNF-alpha secretion in mouse macrophages. Induces secretion of IL6 in mouse and human macrophages likely via different mechanisms. Up-regulates expression of NOS2/iNOS in mouse macrophages. Induces mouse macrophage polarization. The polypeptide is Micronemal protein 3 (Toxoplasma gondii).